Here is a 292-residue protein sequence, read N- to C-terminus: Homoserine kinase (292 aa).

An ATP-binding site is contributed by 84-94; it reads PLSRGLGSSSA.

The protein belongs to the GHMP kinase family. Homoserine kinase subfamily.

The protein resides in the cytoplasm. It catalyses the reaction L-homoserine + ATP = O-phospho-L-homoserine + ADP + H(+). The protein operates within amino-acid biosynthesis; L-threonine biosynthesis; L-threonine from L-aspartate: step 4/5. Its function is as follows. Catalyzes the ATP-dependent phosphorylation of L-homoserine to L-homoserine phosphate. In Campylobacter jejuni subsp. jejuni serotype O:23/36 (strain 81-176), this protein is Homoserine kinase.